Reading from the N-terminus, the 951-residue chain is UvrABC system protein A (951 aa).

Residue 33-40 (GLSGSGKS) coordinates ATP. A C4-type zinc finger spans residues 252–279 (CPICGFTVGELEPRLFSFNAPQGACPDC). ABC transporter domains lie at 309–587 (WNPI…RKSL) and 607–935 (GNGK…QYLK). 639–646 (GVSGSGKS) contacts ATP. The C4-type zinc-finger motif lies at 738–764 (CEACHGDGILKIEMNFLPDVFVPCEVC).

Belongs to the ABC transporter superfamily. UvrA family. As to quaternary structure, forms a heterotetramer with UvrB during the search for lesions.

It is found in the cytoplasm. In terms of biological role, the UvrABC repair system catalyzes the recognition and processing of DNA lesions. UvrA is an ATPase and a DNA-binding protein. A damage recognition complex composed of 2 UvrA and 2 UvrB subunits scans DNA for abnormalities. When the presence of a lesion has been verified by UvrB, the UvrA molecules dissociate. The chain is UvrABC system protein A from Lactiplantibacillus plantarum (strain ATCC BAA-793 / NCIMB 8826 / WCFS1) (Lactobacillus plantarum).